A 591-amino-acid polypeptide reads, in one-letter code: Probable translation initiation factor IF-2 (591 aa).

A tr-type G domain is found at 7-223 (LRTPIVCVMG…LLGLAQRFLE (217 aa)). Positions 16 to 23 (GHVDHGKT) are G1. Residue 16-23 (GHVDHGKT) coordinates GTP. The tract at residues 41 to 45 (AITQH) is G2. A G3 region spans residues 78 to 81 (DTPG). Residues 78–82 (DTPGH) and 132–135 (NKID) contribute to the GTP site. Positions 132-135 (NKID) are G4. The tract at residues 200 to 202 (SAI) is G5.

Belongs to the TRAFAC class translation factor GTPase superfamily. Classic translation factor GTPase family. IF-2 subfamily.

In terms of biological role, function in general translation initiation by promoting the binding of the formylmethionine-tRNA to ribosomes. Seems to function along with eIF-2. The chain is Probable translation initiation factor IF-2 from Methanococcoides burtonii (strain DSM 6242 / NBRC 107633 / OCM 468 / ACE-M).